The primary structure comprises 334 residues: uncharacterized protein (334 aa).

Tyr52 acts as the Proton donor in catalysis. The disordered stretch occupies residues 314–334 (LPPPASPNSEPQVTGGCSSMC). Polar residues predominate over residues 320–334 (PNSEPQVTGGCSSMC).

The protein belongs to the aldo/keto reductase family.

The protein resides in the cytoplasm. Its subcellular location is the nucleus. This is an uncharacterized protein from Schizosaccharomyces pombe (strain 972 / ATCC 24843) (Fission yeast).